The primary structure comprises 159 residues: Photosystem I reaction center subunit XI (159 aa).

3 consecutive transmembrane segments (helical) span residues 53–73, 84–104, and 125–145; these read LEIG…LGPL, LISG…YGIV, and FTAG…TLLE.

It belongs to the PsaL family.

It localises to the cellular thylakoid membrane. This chain is Photosystem I reaction center subunit XI, found in Cyanothece sp. (strain PCC 7425 / ATCC 29141).